We begin with the raw amino-acid sequence, 200 residues long: ATP-dependent Clp protease proteolytic subunit 2 (200 aa).

The active-site Nucleophile is the S99. H124 is an active-site residue.

Belongs to the peptidase S14 family. In terms of assembly, fourteen ClpP subunits assemble into 2 heptameric rings which stack back to back to give a disk-like structure with a central cavity, resembling the structure of eukaryotic proteasomes.

The protein localises to the cytoplasm. It carries out the reaction Hydrolysis of proteins to small peptides in the presence of ATP and magnesium. alpha-casein is the usual test substrate. In the absence of ATP, only oligopeptides shorter than five residues are hydrolyzed (such as succinyl-Leu-Tyr-|-NHMec, and Leu-Tyr-Leu-|-Tyr-Trp, in which cleavage of the -Tyr-|-Leu- and -Tyr-|-Trp bonds also occurs).. Its function is as follows. Cleaves peptides in various proteins in a process that requires ATP hydrolysis. Has a chymotrypsin-like activity. Plays a major role in the degradation of misfolded proteins. This is ATP-dependent Clp protease proteolytic subunit 2 from Treponema denticola (strain ATCC 35405 / DSM 14222 / CIP 103919 / JCM 8153 / KCTC 15104).